The following is a 257-amino-acid chain: Thiazole synthase (257 aa).

The active-site Schiff-base intermediate with DXP is the Lys100. Residues Gly161, 187–188 (AG), and 209–210 (NT) each bind 1-deoxy-D-xylulose 5-phosphate.

It belongs to the ThiG family. As to quaternary structure, homotetramer. Forms heterodimers with either ThiH or ThiS.

It localises to the cytoplasm. The enzyme catalyses [ThiS sulfur-carrier protein]-C-terminal-Gly-aminoethanethioate + 2-iminoacetate + 1-deoxy-D-xylulose 5-phosphate = [ThiS sulfur-carrier protein]-C-terminal Gly-Gly + 2-[(2R,5Z)-2-carboxy-4-methylthiazol-5(2H)-ylidene]ethyl phosphate + 2 H2O + H(+). It functions in the pathway cofactor biosynthesis; thiamine diphosphate biosynthesis. Catalyzes the rearrangement of 1-deoxy-D-xylulose 5-phosphate (DXP) to produce the thiazole phosphate moiety of thiamine. Sulfur is provided by the thiocarboxylate moiety of the carrier protein ThiS. In vitro, sulfur can be provided by H(2)S. The chain is Thiazole synthase from Pelagibacter ubique (strain HTCC1062).